A 399-amino-acid chain; its full sequence is S-adenosylmethionine synthase (399 aa).

Position 17 (His17) interacts with ATP. A Mg(2+)-binding site is contributed by Asp19. Position 52 (Glu52) interacts with K(+). Residues Glu65 and Gln109 each contribute to the L-methionine site. A flexible loop region spans residues 109 to 119; sequence QSADIAQGVDA. ATP is bound by residues 177 to 179, 243 to 244, Asp252, 258 to 259, Ala275, and Lys279; these read DSK, KF, and RK. An L-methionine-binding site is contributed by Asp252. Position 283 (Lys283) interacts with L-methionine.

Belongs to the AdoMet synthase family. As to quaternary structure, homotetramer; dimer of dimers. Mg(2+) is required as a cofactor. The cofactor is K(+).

The protein resides in the cytoplasm. The catalysed reaction is L-methionine + ATP + H2O = S-adenosyl-L-methionine + phosphate + diphosphate. It participates in amino-acid biosynthesis; S-adenosyl-L-methionine biosynthesis; S-adenosyl-L-methionine from L-methionine: step 1/1. Functionally, catalyzes the formation of S-adenosylmethionine (AdoMet) from methionine and ATP. The overall synthetic reaction is composed of two sequential steps, AdoMet formation and the subsequent tripolyphosphate hydrolysis which occurs prior to release of AdoMet from the enzyme. The polypeptide is S-adenosylmethionine synthase (Bradyrhizobium sp. (strain BTAi1 / ATCC BAA-1182)).